The chain runs to 362 residues: Photosystem II protein D1 3 (362 aa).

Transmembrane regions (helical) follow at residues 29-46 (YVGWFGVLMIPTLLSATI), 118-133 (HFLIGVFCYLGREWEL), and 142-156 (WICIAYSAPVAAATA). Residue histidine 118 participates in chlorophyll a binding. Residue tyrosine 126 coordinates pheophytin a. Residues aspartate 170 and glutamate 189 each contribute to the [CaMn4O5] cluster site. A helical membrane pass occupies residues 197-218 (FHMLGVAGVFGGALISAMHGSL). Histidine 198 serves as a coordination point for chlorophyll a. A quinone-binding positions include histidine 215 and 264-265 (AF). Position 215 (histidine 215) interacts with Fe cation. Histidine 274 is a binding site for Fe cation. The helical transmembrane segment at 276–290 (IMAAFPVIGIWFTSL) threads the bilayer. Positions 334, 335, 344, and 346 each coordinate [CaMn4O5] cluster. Positions 347 to 362 (GTESAPVAVSTAKVGG) are excised as a propeptide.

The protein belongs to the reaction center PufL/M/PsbA/D family. As to quaternary structure, PSII is composed of 1 copy each of membrane proteins PsbA, PsbB, PsbC, PsbD, PsbE, PsbF, PsbH, PsbI, PsbJ, PsbK, PsbL, PsbM, PsbT, PsbX, Psb30/Ycf12, peripheral proteins PsbO, CyanoQ (PsbQ), PsbU, PsbV and a large number of cofactors. It forms dimeric complexes. The cofactor is The D1/D2 heterodimer binds P680, chlorophylls that are the primary electron donor of PSII, and subsequent electron acceptors. It shares a non-heme iron and each subunit binds pheophytin, quinone, additional chlorophylls, carotenoids and lipids. D1 provides most of the ligands for the Mn4-Ca-O5 cluster of the oxygen-evolving complex (OEC). There is also a Cl(-1) ion associated with D1 and D2, which is required for oxygen evolution. The PSII complex binds additional chlorophylls, carotenoids and specific lipids.. Post-translationally, tyr-161 forms a radical intermediate that is referred to as redox-active TyrZ, YZ or Y-Z. In terms of processing, C-terminally processed by CtpA; processing is essential to allow assembly of the oxygen-evolving complex and thus photosynthetic growth.

Its subcellular location is the cell inner membrane. The enzyme catalyses 2 a plastoquinone + 4 hnu + 2 H2O = 2 a plastoquinol + O2. In terms of biological role, photosystem II (PSII) is a light-driven water:plastoquinone oxidoreductase that uses light energy to abstract electrons from H(2)O, generating O(2) and a proton gradient subsequently used for ATP formation. It consists of a core antenna complex that captures photons, and an electron transfer chain that converts photonic excitation into a charge separation. The D1/D2 (PsbA/PsbD) reaction center heterodimer binds P680, the primary electron donor of PSII as well as several subsequent electron acceptors. This Gloeobacter violaceus (strain ATCC 29082 / PCC 7421) protein is Photosystem II protein D1 3.